The sequence spans 314 residues: ATP synthase gamma chain (314 aa).

The protein belongs to the ATPase gamma chain family. In terms of assembly, F-type ATPases have 2 components, CF(1) - the catalytic core - and CF(0) - the membrane proton channel. CF(1) has five subunits: alpha(3), beta(3), gamma(1), delta(1), epsilon(1). CF(0) has three main subunits: a, b and c.

It is found in the cellular thylakoid membrane. Functionally, produces ATP from ADP in the presence of a proton gradient across the membrane. The gamma chain is believed to be important in regulating ATPase activity and the flow of protons through the CF(0) complex. In Synechocystis sp. (strain ATCC 27184 / PCC 6803 / Kazusa), this protein is ATP synthase gamma chain.